The sequence spans 393 residues: NADH-quinone oxidoreductase subunit D 2 (393 aa).

It belongs to the complex I 49 kDa subunit family. In terms of assembly, NDH-1 is composed of 14 different subunits. Subunits NuoB, C, D, E, F, and G constitute the peripheral sector of the complex.

It localises to the cell inner membrane. The catalysed reaction is a quinone + NADH + 5 H(+)(in) = a quinol + NAD(+) + 4 H(+)(out). Its function is as follows. NDH-1 shuttles electrons from NADH, via FMN and iron-sulfur (Fe-S) centers, to quinones in the respiratory chain. The immediate electron acceptor for the enzyme in this species is believed to be a menaquinone. Couples the redox reaction to proton translocation (for every two electrons transferred, four hydrogen ions are translocated across the cytoplasmic membrane), and thus conserves the redox energy in a proton gradient. In Cytophaga hutchinsonii (strain ATCC 33406 / DSM 1761 / CIP 103989 / NBRC 15051 / NCIMB 9469 / D465), this protein is NADH-quinone oxidoreductase subunit D 2.